Consider the following 519-residue polypeptide: Cytosol aminopeptidase (519 aa).

Ser42 carries the phosphoserine modification. N6-succinyllysine is present on Lys45. Ser54 carries the phosphoserine modification. 2 positions are modified to N6-succinyllysine: Lys61 and Lys103. A phosphoserine mark is found at Ser180 and Ser194. Zn(2+)-binding residues include Leu202, Met203, and Thr205. Residue Lys221 is modified to N6-acetyllysine; alternate. The residue at position 221 (Lys221) is an N6-succinyllysine; alternate. Ser238 carries the phosphoserine modification. Zn(2+) is bound by residues Lys282 and Asp287. Residues Lys282, Asp287, Ser292, and Lys294 each contribute to the substrate site. Position 287 (Asp287) interacts with Mg(2+). Residue Lys294 is part of the active site. 4 residues coordinate Zn(2+): Arg303, Asp305, Asp364, and Glu366. The substrate site is built by Asp305 and Asp364. Residues Asp364 and Glu366 each contribute to the Mg(2+) site. Residue Arg368 is part of the active site. Lys455 is modified (N6-acetyllysine; alternate). Lys455 is modified (N6-succinyllysine; alternate). Lys476 is modified (N6-succinyllysine). Lys489 carries the N6-acetyllysine; alternate modification. Residue Lys489 is modified to N6-succinyllysine; alternate.

The protein belongs to the peptidase M17 family. Homohexamer. Zn(2+) is required as a cofactor. It depends on Mn(2+) as a cofactor.

The protein localises to the cytoplasm. The catalysed reaction is Release of an N-terminal amino acid, Xaa-|-Yaa-, in which Xaa is preferably Leu, but may be other amino acids including Pro although not Arg or Lys, and Yaa may be Pro. Amino acid amides and methyl esters are also readily hydrolyzed, but rates on arylamides are exceedingly low.. The enzyme catalyses an S-substituted L-cysteinylglycine + H2O = an S-substituted L-cysteine + glycine. It catalyses the reaction L-cysteinylglycine + H2O = L-cysteine + glycine. It carries out the reaction S-benzyl-L-cysteinylglycine + H2O = S-benzyl-L-cysteine + glycine. The catalysed reaction is Release of N-terminal proline from a peptide.. Functionally, cytosolic metallopeptidase that catalyzes the removal of unsubstituted N-terminal hydrophobic amino acids from various peptides. The presence of Zn(2+) ions is essential for the peptidase activity, and the association with other cofactors can modulate the substrate spectificity of the enzyme. For instance, in the presence of Mn(2+), it displays a specific Cys-Gly hydrolyzing activity of Cys-Gly-S-conjugates. Involved in the metabolism of glutathione and in the degradation of glutathione S-conjugates, which may play a role in the control of the cell redox status. The chain is Cytosol aminopeptidase from Sus scrofa (Pig).